We begin with the raw amino-acid sequence, 164 residues long: MSDMELAELWVAVAFFVFVGILLYNGVHKALAKALDARGARIAAELDEARRLKEEAQKLVAEYKRKQREAEAEAEAIVTAAKAEAERLAAETKAKLEEFVSRRTRMAEDKIAQAEHQALADVKAFAADAAVQAAERILAASVPGTATGDRLLGQAIQDVRGKLN.

A helical transmembrane segment spans residues 4–24; it reads MELAELWVAVAFFVFVGILLY.

The protein belongs to the ATPase B chain family. As to quaternary structure, F-type ATPases have 2 components, F(1) - the catalytic core - and F(0) - the membrane proton channel. F(1) has five subunits: alpha(3), beta(3), gamma(1), delta(1), epsilon(1). F(0) has three main subunits: a(1), b(2) and c(10-14). The alpha and beta chains form an alternating ring which encloses part of the gamma chain. F(1) is attached to F(0) by a central stalk formed by the gamma and epsilon chains, while a peripheral stalk is formed by the delta and b chains.

The protein localises to the cell inner membrane. Its function is as follows. F(1)F(0) ATP synthase produces ATP from ADP in the presence of a proton or sodium gradient. F-type ATPases consist of two structural domains, F(1) containing the extramembraneous catalytic core and F(0) containing the membrane proton channel, linked together by a central stalk and a peripheral stalk. During catalysis, ATP synthesis in the catalytic domain of F(1) is coupled via a rotary mechanism of the central stalk subunits to proton translocation. In terms of biological role, component of the F(0) channel, it forms part of the peripheral stalk, linking F(1) to F(0). This is ATP synthase subunit b 1 from Azorhizobium caulinodans (strain ATCC 43989 / DSM 5975 / JCM 20966 / LMG 6465 / NBRC 14845 / NCIMB 13405 / ORS 571).